Consider the following 185-residue polypeptide: Elongation factor P (185 aa).

Belongs to the elongation factor P family.

Its subcellular location is the cytoplasm. It functions in the pathway protein biosynthesis; polypeptide chain elongation. Involved in peptide bond synthesis. Stimulates efficient translation and peptide-bond synthesis on native or reconstituted 70S ribosomes in vitro. Probably functions indirectly by altering the affinity of the ribosome for aminoacyl-tRNA, thus increasing their reactivity as acceptors for peptidyl transferase. The protein is Elongation factor P of Thermosynechococcus vestitus (strain NIES-2133 / IAM M-273 / BP-1).